A 1423-amino-acid chain; its full sequence is Autophagy-related protein 11 (1423 aa).

2 coiled-coil regions span residues 551–589 (DDELLRSLQDDKSKLESKLKTAESRVRRLEDLLHRQSQA) and 625–978 (SEGT…ASEL). Disordered stretches follow at residues 583 to 660 (LHRQ…SNRA) and 1028 to 1048 (RAERAAQNPNDSSDPGTSLRK). The segment covering 585–602 (RQSQASRPGNLFQPQTNS) has biased composition (polar residues). A compositionally biased stretch (basic and acidic residues) spans 631–648 (LLRRISELENELREEKQR). Composition is skewed to polar residues over residues 650 to 660 (SRIQNDLSNRA) and 1034 to 1047 (QNPNDSSDPGTSLR). Residues 1102 to 1130 (HRIKEVEHKARKWQKEARSYRDRAHIAQK) are a coiled coil. The interval 1327–1423 (SLRAAAPETP…DYTYESPGKK (97 aa)) is disordered. A compositionally biased stretch (basic and acidic residues) spans 1383-1395 (KTAEPRRMLDRQE).

This sequence belongs to the ATG11 family. Homodimer and potential homooligomers. Interacts with ATG1 kinase and the ATG19 and ATG34 cargo protein transporters. Interacts with ATG9, ATG17 and ATG20.

It is found in the preautophagosomal structure membrane. The protein resides in the vacuole membrane. Involved in cytoplasm to vacuole transport (Cvt), pexophagy, mitophagy and nucleophagy. Recruits mitochondria for their selective degradation via autophagy (mitophagy) during starvation, through its interaction with ATG32. Works as scaffold proteins that recruit ATG proteins to the pre-autophagosome (PAS), the site of vesicle/autophagosome formation. Required for ATG9 anterograde transport from the mitochondria to the PAS. Also recruits the ATG19-prAPE1 complex to the PAS. Required for the Cvt vesicles completion. Plays a role in morphological differentiation and cephalosporin production. In Hapsidospora chrysogena (Acremonium chrysogenum), this protein is Autophagy-related protein 11.